Reading from the N-terminus, the 285-residue chain is Putative hydrolase DDAH2 (285 aa).

The active-site Proton donor is His171. The active-site Nucleophile is Cys276.

It belongs to the DDAH family. In terms of processing, phosphorylated by TBK1. Phosphorylation inhibits the translocation into the mitochondrion upon Sendai viral infection. In terms of tissue distribution, detected in heart, placenta, lung, liver, skeletal muscle, kidney and pancreas, and at very low levels in brain.

It is found in the cytoplasm. The protein resides in the mitochondrion. Functionally, putative hydrolase with unknown substrate. Does not hydrolyze N(G),N(G)-dimethyl-L-arginine (ADMA) which acts as an inhibitor of NOS. In endothelial cells, induces expression of vascular endothelial growth factor (VEGF) via phosphorylation of the transcription factor SP1 by PKA in a process that is independent of NO and NO synthase. Similarly, enhances pancreatic insulin secretion through SP1-mediated transcriptional up-regulation of secretagogin/SCGN, an insulin vesicle docking protein. Upon viral infection, relocates to mitochondria where it promotes mitochondrial fission through activation of DNM1L leading to the inhibition of innate response activation mediated by MAVS. This is Putative hydrolase DDAH2 from Homo sapiens (Human).